We begin with the raw amino-acid sequence, 208 residues long: Small ribosomal subunit protein uS4 (208 aa).

In terms of domain architecture, S4 RNA-binding spans 99-165 (RRLDNVVFQL…PRLKEILSSL (67 aa)).

The protein belongs to the universal ribosomal protein uS4 family. In terms of assembly, part of the 30S ribosomal subunit. Contacts protein S5. The interaction surface between S4 and S5 is involved in control of translational fidelity.

One of the primary rRNA binding proteins, it binds directly to 16S rRNA where it nucleates assembly of the body of the 30S subunit. Its function is as follows. With S5 and S12 plays an important role in translational accuracy. The chain is Small ribosomal subunit protein uS4 from Desulfitobacterium hafniense (strain Y51).